Consider the following 80-residue polypeptide: MPYKLQESFLNTARKKRVKVSVYLVNGVRLQGRIRSFDLFTILLEDGKQQTLVYKHAITTIVPHERLEIEFEEAGVPGQG.

A Sm domain is found at glutamate 7–leucine 67.

Belongs to the Hfq family. Homohexamer.

RNA chaperone that binds small regulatory RNA (sRNAs) and mRNAs to facilitate mRNA translational regulation in response to envelope stress, environmental stress and changes in metabolite concentrations. Also binds with high specificity to tRNAs. The sequence is that of RNA-binding protein Hfq from Aquifex aeolicus (strain VF5).